We begin with the raw amino-acid sequence, 183 residues long: Translation initiation factor IF-3 (183 aa).

The protein belongs to the IF-3 family. Monomer.

It localises to the cytoplasm. In terms of biological role, IF-3 binds to the 30S ribosomal subunit and shifts the equilibrium between 70S ribosomes and their 50S and 30S subunits in favor of the free subunits, thus enhancing the availability of 30S subunits on which protein synthesis initiation begins. The chain is Translation initiation factor IF-3 from Pseudomonas putida (strain ATCC 700007 / DSM 6899 / JCM 31910 / BCRC 17059 / LMG 24140 / F1).